The chain runs to 901 residues: MADSSPASFLTQADALLRKNLVFQKRNIWSNIRLITIPFFLCLLLLVIQMLFDTQFNDVHGQCGCNEKTCGLRYSTSEQAAFCAIPNPPQWTPLLQIPAPEYRAAIPYPSHTSPATFLFTGNNQSLGNILMGNMYSNSSGFDGDLAYYVLGSSSFPAYTNHMDSAFISDLPIYNIQHECSPNSSFSILIHQSPLAFPKEVNCVQGLNLWRNSSSDVNNELFKGYRKGNPDKKINEFAGAFDFQNTNGNNLNVSVWYNSTYKNDTVVRPMALIRVPRLVNLASNAYLEFLKGSETKILFEYVKEMPKPETKLSLDIASLIGPLFFTWVILLLFPVILTTLVYEKQQRLRIMMKMHGLGDVPYWIVSYTYFLLISILYMLCFAIFGSLIGLNFFRLNDYSIQLVFFFICINLQISVAFLASAMFSDVKTATVIAYIYVFGTGLLGIFLFQFFLEDPLFPRGWIIAMELYPGFSLYRGLYELSQSAFAGDYRGIDGMKWRDFGNGMKEVTCIMLIEWLLLLGLAYYIDQIIYSRKHPLFFLLQSTSKKKQHFSDNKISKVVVEMEKPDVCREREKVEQCLLKSTRDSAVLCNNLKKVYSGKDGNPQKLAVRGLSLALPQGECFGMLGPNGAGKTSFINMMTGIIKPSSGTAFVQGLDILTDMDRIYTTIGVCPQHDLLWEKLSGREHLLFYGRLKNLKGSVLTQAVEESLRSVNLFHGGIGDKQVSKYSGGMKRRLSVAISLIGSPKVVYMDEPSTGLDPASRKSLWDVVKRAKRKGAIILTTHSMEEAEILCDRIGIFVDGSLQCIGNPKELKSRYGGSYVLTVTTSEEHEKEVEQLVHNISTNAKKIYRTAGTQKFELPKQEVKIGEVFKALEKAKTMFPVVAWGLADTTLEDVFIKVAQTS.

7 helical membrane passes run 34–54 (LITIPFFLCLLLLVIQMLFDT), 315–335 (IASLIGPLFFTWVILLLFPVI), 369–389 (FLLISILYMLCFAIFGSLIGL), 402–422 (VFFFICINLQISVAFLASAMF), 427–447 (TATVIAYIYVFGTGLLGIFLF), 460–477 (WIIAMELYPGFSLYRGLY), and 508–528 (CIMLIEWLLLLGLAYYIDQII). Positions 586–823 (VLCNNLKKVY…YGGSYVLTVT (238 aa)) constitute an ABC transporter domain. Residue 624-631 (GPNGAGKT) coordinates ATP.

Belongs to the ABC transporter superfamily. ABCA family. CPR flippase (TC 3.A.1.211) subfamily.

It is found in the membrane. This chain is ABC transporter A family member 8 (ABCA8), found in Arabidopsis thaliana (Mouse-ear cress).